The chain runs to 234 residues: Ribonuclease 3 (234 aa).

The RNase III domain maps to 6–134 (RKSLEERVGH…IVGALYLDGG (129 aa)). Glu-47 contributes to the Mg(2+) binding site. Asp-51 is an active-site residue. Residues Ser-120 and Glu-123 each contribute to the Mg(2+) site. Glu-123 is a catalytic residue. One can recognise a DRBM domain in the interval 162–231 (DYKTRLQELV…AKNALEMKYK (70 aa)).

This sequence belongs to the ribonuclease III family. In terms of assembly, homodimer. The cofactor is Mg(2+).

It is found in the cytoplasm. The enzyme catalyses Endonucleolytic cleavage to 5'-phosphomonoester.. Its function is as follows. Digests double-stranded RNA. Involved in the processing of primary rRNA transcript to yield the immediate precursors to the large and small rRNAs (23S and 16S). Processes some mRNAs, and tRNAs when they are encoded in the rRNA operon. Processes pre-crRNA and tracrRNA of type II CRISPR loci if present in the organism. This is Ribonuclease 3 from Bdellovibrio bacteriovorus (strain ATCC 15356 / DSM 50701 / NCIMB 9529 / HD100).